The chain runs to 451 residues: MLVRTLYISSSVGSSNMLCNHGLKVIGKYSAIHEATRKIIVRSYSKETIKKHNKQAILNTAPIEFIANNSPLVGISDVNTIKEAAKRTLRCTDDVTDDQTDEIHPHLPFNVKPVDGKARAALKKEKNSMSLDIKKTMEAYVQLTKPRLTILVMLSAICSYALSPYPATVTELLCLTVGTTMCSGAANAINMGREPDYDRQMIRTQARPVVRGAVTPKQAFSFAFGMGTLGTSILYLGVNPTVAALGLSNIALYSWIYTSLKRKHIINTWVGALVGAIPPLMGWAAASPLTHPGSWCLAGLLYAWQFPHFNTLSHNIRNEYKNAGYVMTAWKNPLLNARVALRYSLLMFPLCFGLSYFNITDWYYQIDSGLVNAWLCLWSFKFYMQQRLNYSSKIKNDRVKFNEGLATANVYARKAFFASVLHLPAVLILAILHKKNRWDWLFEDSENPKLK.

Helical transmembrane passes span 149–169 (TILV…PATV), 240–260 (PTVA…YTSL), 265–285 (IINT…GWAA), 289–309 (LTHP…FPHF), 339–359 (VALR…YFNI), and 414–434 (KAFF…ILHK).

It belongs to the UbiA prenyltransferase family.

The protein localises to the mitochondrion membrane. Its function is as follows. Converts protoheme IX and farnesyl diphosphate to heme O. This is Protoheme IX farnesyltransferase, mitochondrial (COX10) from Candida glabrata (strain ATCC 2001 / BCRC 20586 / JCM 3761 / NBRC 0622 / NRRL Y-65 / CBS 138) (Yeast).